A 318-amino-acid polypeptide reads, in one-letter code: Aspartate carbamoyltransferase catalytic subunit (318 aa).

2 residues coordinate carbamoyl phosphate: R62 and T63. Residue K90 coordinates L-aspartate. Carbamoyl phosphate contacts are provided by R112, H140, and Q143. L-aspartate-binding residues include R173 and R227. The carbamoyl phosphate site is built by G268 and P269.

It belongs to the aspartate/ornithine carbamoyltransferase superfamily. ATCase family. Heterododecamer (2C3:3R2) of six catalytic PyrB chains organized as two trimers (C3), and six regulatory PyrI chains organized as three dimers (R2).

The enzyme catalyses carbamoyl phosphate + L-aspartate = N-carbamoyl-L-aspartate + phosphate + H(+). Its pathway is pyrimidine metabolism; UMP biosynthesis via de novo pathway; (S)-dihydroorotate from bicarbonate: step 2/3. Its function is as follows. Catalyzes the condensation of carbamoyl phosphate and aspartate to form carbamoyl aspartate and inorganic phosphate, the committed step in the de novo pyrimidine nucleotide biosynthesis pathway. The protein is Aspartate carbamoyltransferase catalytic subunit of Desulfotalea psychrophila (strain LSv54 / DSM 12343).